The sequence spans 1336 residues: pre-mRNA 3' end processing protein WDR33 (1336 aa).

The residue at position 2 (alanine 2) is an N-acetylalanine. A Phosphoserine modification is found at serine 7. Lysine 46 carries the N6-acetyllysine modification. WD repeat units follow at residues 117-156 (KVKC…FETI), 159-198 (AHDS…VKMF), 200-239 (AHKE…EERI), 242-283 (GHGA…SLAT), 286-325 (AHKN…EELQ), 329-369 (GHKK…EVGG), and 373-412 (AHEG…DKMR). Glycyl lysine isopeptide (Lys-Gly) (interchain with G-Cter in SUMO2) cross-links involve residues lysine 526, lysine 530, and lysine 560. The interval 568–1336 (QVEQIQPPPS…GASRGGGRGR (769 aa)) is disordered. Residues 573-590 (QPPPSSGTPLLGPQPFPG) show a composition bias toward pro residues. The segment covering 594–607 (MSQIPQGFQQPHPS) has biased composition (polar residues). Over residues 608 to 643 (QQMPMNMAQMGPPGPQGQFRPPGPQGQMGPQGPPLH) the composition is skewed to low complexity. The Collagen-like domain maps to 618-770 (GPPGPQGQFR…GPGSQGIQGP (153 aa)). Residues 683–695 (PHGPLGPQGPPGP) are compositionally biased toward pro residues. Low complexity-rich tracts occupy residues 696 to 707 (QGSSGPQGHMGP) and 726 to 751 (QGHL…GMQG). Position 782 is an omega-N-methylarginine (arginine 782). Positions 854 to 869 (GPPGSQSQQGPPQGSL) are enriched in low complexity. Arginine 915 carries the asymmetric dimethylarginine modification. Residues 932 to 941 (PGLGQQGAQG) are compositionally biased toward low complexity. Basic and acidic residues-rich tracts occupy residues 971 to 989 (SERR…ERGP) and 998 to 1034 (GPPD…EFEG). Arginine 987 is subject to Omega-N-methylarginine. At arginine 1035 the chain carries Omega-N-methylarginine. 2 stretches are compositionally biased toward basic and acidic residues: residues 1056-1068 (PDHR…DGRG) and 1078-1122 (EGRR…RGRD). Residues 1130–1140 (FGPEENFDASE) show a composition bias toward acidic residues. The segment covering 1141 to 1150 (EAARGRDLRG) has biased composition (basic and acidic residues). The segment covering 1151 to 1160 (RGRGTPRGGR) has biased composition (basic residues). 2 stretches are compositionally biased toward basic and acidic residues: residues 1169-1217 (EFPR…RERS) and 1242-1259 (SEHR…DRGG). Serine 1210 is subject to Phosphoserine. The residue at position 1262 (arginine 1262) is an Omega-N-methylarginine. Residues 1281-1293 (DGEHHDGYHRDEP) are compositionally biased toward basic and acidic residues. The span at 1301-1326 (GTPSRGGRSGSNWGRGSNMNSGPPRR) shows a compositional bias: low complexity. An Asymmetric dimethylarginine; alternate modification is found at arginine 1315. The residue at position 1315 (arginine 1315) is an Omega-N-methylarginine; alternate.

This sequence belongs to the WD repeat WDR33 family. Component of the cleavage and polyadenylation specificity factor (CPSF) module of the pre-mRNA 3'-end processing complex. Interacts with CPSF3/CPSF73. In terms of tissue distribution, most highly expressed in testis.

It is found in the nucleus. Its function is as follows. Essential for both cleavage and polyadenylation of pre-mRNA 3' ends. This chain is pre-mRNA 3' end processing protein WDR33 (WDR33), found in Homo sapiens (Human).